Here is a 181-residue protein sequence, read N- to C-terminus: ATP-dependent protease subunit HslV (181 aa).

Thr-7 is a catalytic residue. 3 residues coordinate Na(+): Gly-164, Cys-167, and Thr-170.

Belongs to the peptidase T1B family. HslV subfamily. As to quaternary structure, a double ring-shaped homohexamer of HslV is capped on each side by a ring-shaped HslU homohexamer. The assembly of the HslU/HslV complex is dependent on binding of ATP.

Its subcellular location is the cytoplasm. It carries out the reaction ATP-dependent cleavage of peptide bonds with broad specificity.. Allosterically activated by HslU binding. In terms of biological role, protease subunit of a proteasome-like degradation complex believed to be a general protein degrading machinery. The polypeptide is ATP-dependent protease subunit HslV (Shouchella clausii (strain KSM-K16) (Alkalihalobacillus clausii)).